The primary structure comprises 185 residues: Ribosome-recycling factor (185 aa).

This sequence belongs to the RRF family.

The protein localises to the cytoplasm. Functionally, responsible for the release of ribosomes from messenger RNA at the termination of protein biosynthesis. May increase the efficiency of translation by recycling ribosomes from one round of translation to another. This chain is Ribosome-recycling factor, found in Shewanella frigidimarina (strain NCIMB 400).